A 289-amino-acid polypeptide reads, in one-letter code: Cysteine-rich venom protein Mr30 (289 aa).

An N-terminal signal peptide occupies residues 1–24 (MLSTMQTVGAILMLSIVFVAGTKR). The residue at position 33 (glutamate 33) is a 4-carboxyglutamate. The 123-residue stretch at 62–184 (VRMHNVIRAT…GEDRYFVCNY (123 aa)) folds into the SCP domain.

This sequence belongs to the CRISP family. Contains 11 disulfide bonds. As to expression, expressed by the venom duct.

It localises to the secreted. In terms of biological role, has no proteolytic activity. In Conus marmoreus (Marble cone), this protein is Cysteine-rich venom protein Mr30.